The chain runs to 302 residues: Glycine--tRNA ligase alpha subunit (302 aa).

It belongs to the class-II aminoacyl-tRNA synthetase family. As to quaternary structure, tetramer of two alpha and two beta subunits.

The protein resides in the cytoplasm. It catalyses the reaction tRNA(Gly) + glycine + ATP = glycyl-tRNA(Gly) + AMP + diphosphate. The polypeptide is Glycine--tRNA ligase alpha subunit (Xanthomonas euvesicatoria pv. vesicatoria (strain 85-10) (Xanthomonas campestris pv. vesicatoria)).